The sequence spans 237 residues: Octopine transport system permease protein OccQ (237 aa).

Residues 22 to 222 enclose the ABC transmembrane type-1 domain; the sequence is TAMTMAVAFS…LITFVSGQVF (201 aa). The next 4 membrane-spanning stretches (helical) occupy residues 26 to 46, 72 to 92, 96 to 116, and 202 to 222; these read MAVA…GAAA, LVIY…ASLF, GFVG…VSGA, and SFYL…GQVF.

This sequence belongs to the binding-protein-dependent transport system permease family. HisMQ subfamily.

The protein resides in the cell inner membrane. Component of the octopine active transport system probably consisting of four subunits: Q, M, P and T. This chain is Octopine transport system permease protein OccQ (occQ), found in Agrobacterium tumefaciens (strain Ach5).